A 386-amino-acid polypeptide reads, in one-letter code: Magnesium transporter MRS2-7 (386 aa).

A run of 2 helical transmembrane segments spans residues 321 to 341 (LMLS…GIFG) and 355 to 375 (IFKW…VIIL). The Required for magnesium transport activity signature appears at 341-343 (GMN).

The protein belongs to the CorA metal ion transporter (MIT) (TC 1.A.35.5) family. In terms of tissue distribution, isoform 1 is expressed in the whole plant. Isoform 4 is expressed only in roots and flowers.

It localises to the endoplasmic reticulum membrane. Low-affinity magnesium transporter that mediates the influx of magnesium. This chain is Magnesium transporter MRS2-7 (MRS2-7), found in Arabidopsis thaliana (Mouse-ear cress).